The sequence spans 342 residues: Cell division protein FtsQ (342 aa).

Over 1–80 the chain is Cytoplasmic; that stretch reads MDGAGSLTRS…ALVERYLPRR (80 aa). A helical transmembrane segment spans residues 81 to 99; the sequence is VGISMTVLLLIGSCGFGIV. Residues 100-342 lie on the Periplasmic side of the membrane; the sequence is KGGHLQDFVT…KKKKKAGDAA (243 aa). Residues 124–192 form the POTRA domain; that stretch reads FRITSVVING…GQLMIELTER (69 aa).

This sequence belongs to the FtsQ/DivIB family. FtsQ subfamily.

The protein resides in the cell inner membrane. Functionally, essential cell division protein. This chain is Cell division protein FtsQ, found in Bradyrhizobium diazoefficiens (strain JCM 10833 / BCRC 13528 / IAM 13628 / NBRC 14792 / USDA 110).